Consider the following 347-residue polypeptide: Protein-glutamate methylesterase/protein-glutamine glutaminase 1 (347 aa).

Positions Arg6–Lys123 constitute a Response regulatory domain. Asp57 is modified (4-aspartylphosphate). A CheB-type methylesterase domain is found at Phe150–Arg342. Active-site residues include Ser162, His188, and Asp284.

The protein belongs to the CheB family. Post-translationally, phosphorylated by CheA. Phosphorylation of the N-terminal regulatory domain activates the methylesterase activity.

The protein localises to the cytoplasm. The catalysed reaction is [protein]-L-glutamate 5-O-methyl ester + H2O = L-glutamyl-[protein] + methanol + H(+). It catalyses the reaction L-glutaminyl-[protein] + H2O = L-glutamyl-[protein] + NH4(+). Functionally, involved in chemotaxis. Part of a chemotaxis signal transduction system that modulates chemotaxis in response to various stimuli. Catalyzes the demethylation of specific methylglutamate residues introduced into the chemoreceptors (methyl-accepting chemotaxis proteins or MCP) by CheR. Also mediates the irreversible deamidation of specific glutamine residues to glutamic acid. The sequence is that of Protein-glutamate methylesterase/protein-glutamine glutaminase 1 from Rhizobium johnstonii (strain DSM 114642 / LMG 32736 / 3841) (Rhizobium leguminosarum bv. viciae).